A 354-amino-acid chain; its full sequence is Alternative oxidase, mitochondrial (354 aa).

Residues 1-64 constitute a mitochondrion transit peptide; that stretch reads MNSMSTTGPI…RFISSTPQSQ (64 aa). Residues 153-173 traverse the membrane as a helical segment; that stretch reads FVFLESVAGVPGMVGGMLRHL. The Fe cation site is built by Glu-157, Glu-196, and His-199. A helical membrane pass occupies residues 215–235; sequence LMVLGAQGVFFNGFFLSYLIS. Positions 247, 302, and 305 each coordinate Fe cation. The disordered stretch occupies residues 333–354; it reads KPHPGKGIKHLKTTGWEREEVV. A compositionally biased stretch (basic residues) spans 335–344; that stretch reads HPGKGIKHLK.

It belongs to the alternative oxidase family. Requires Fe cation as cofactor.

Its subcellular location is the mitochondrion inner membrane. Its function is as follows. Catalyzes cyanide-resistant oxygen consumption. May increase respiration when the cytochrome respiratory pathway is restricted, or in response to low temperatures. The polypeptide is Alternative oxidase, mitochondrial (alxA) (Emericella nidulans (strain FGSC A4 / ATCC 38163 / CBS 112.46 / NRRL 194 / M139) (Aspergillus nidulans)).